The sequence spans 268 residues: 3-deoxy-manno-octulosonate cytidylyltransferase (268 aa).

It belongs to the KdsB family.

It localises to the cytoplasm. The enzyme catalyses 3-deoxy-alpha-D-manno-oct-2-ulosonate + CTP = CMP-3-deoxy-beta-D-manno-octulosonate + diphosphate. It participates in nucleotide-sugar biosynthesis; CMP-3-deoxy-D-manno-octulosonate biosynthesis; CMP-3-deoxy-D-manno-octulosonate from 3-deoxy-D-manno-octulosonate and CTP: step 1/1. It functions in the pathway bacterial outer membrane biogenesis; lipopolysaccharide biosynthesis. Its function is as follows. Activates KDO (a required 8-carbon sugar) for incorporation into bacterial lipopolysaccharide in Gram-negative bacteria. This Ralstonia pickettii (strain 12J) protein is 3-deoxy-manno-octulosonate cytidylyltransferase.